The chain runs to 644 residues: 1-deoxy-D-xylulose-5-phosphate synthase (644 aa).

Thiamine diphosphate contacts are provided by residues His-84 and 125-127; that span reads GHS. Residue Asp-156 participates in Mg(2+) binding. Residues 157 to 158, Asn-185, Tyr-296, and Glu-378 contribute to the thiamine diphosphate site; that span reads GA. Asn-185 contributes to the Mg(2+) binding site.

This sequence belongs to the transketolase family. DXPS subfamily. As to quaternary structure, homodimer. Requires Mg(2+) as cofactor. Thiamine diphosphate serves as cofactor.

The catalysed reaction is D-glyceraldehyde 3-phosphate + pyruvate + H(+) = 1-deoxy-D-xylulose 5-phosphate + CO2. It functions in the pathway metabolic intermediate biosynthesis; 1-deoxy-D-xylulose 5-phosphate biosynthesis; 1-deoxy-D-xylulose 5-phosphate from D-glyceraldehyde 3-phosphate and pyruvate: step 1/1. Catalyzes the acyloin condensation reaction between C atoms 2 and 3 of pyruvate and glyceraldehyde 3-phosphate to yield 1-deoxy-D-xylulose-5-phosphate (DXP). In Paramagnetospirillum magneticum (strain ATCC 700264 / AMB-1) (Magnetospirillum magneticum), this protein is 1-deoxy-D-xylulose-5-phosphate synthase.